The primary structure comprises 197 residues: Phosphoheptose isomerase (197 aa).

An SIS domain is found at 34–196; it reads MVHCLLSGNK…DHTLFPQDEQ (163 aa). Residue 49–51 participates in substrate binding; sequence NGG. Zn(2+)-binding residues include H58 and E62. Substrate is bound by residues E62, 91–92, 117–119, S122, and Q172; these read ND and STS. Positions 172 and 180 each coordinate Zn(2+).

Belongs to the SIS family. GmhA subfamily. In terms of assembly, homotetramer. Requires Zn(2+) as cofactor.

The protein resides in the cytoplasm. It carries out the reaction 2 D-sedoheptulose 7-phosphate = D-glycero-alpha-D-manno-heptose 7-phosphate + D-glycero-beta-D-manno-heptose 7-phosphate. The protein operates within carbohydrate biosynthesis; D-glycero-D-manno-heptose 7-phosphate biosynthesis; D-glycero-alpha-D-manno-heptose 7-phosphate and D-glycero-beta-D-manno-heptose 7-phosphate from sedoheptulose 7-phosphate: step 1/1. In terms of biological role, catalyzes the isomerization of sedoheptulose 7-phosphate in D-glycero-D-manno-heptose 7-phosphate. This is Phosphoheptose isomerase from Shewanella halifaxensis (strain HAW-EB4).